The sequence spans 339 residues: 4-hydroxy-2-oxovalerate aldolase 3 (339 aa).

The Pyruvate carboxyltransferase domain maps to 7 to 259 (IRVTDTSLRD…KTGIDFFAIA (253 aa)). 15–16 (RD) serves as a coordination point for substrate. D16 is a binding site for Mn(2+). Catalysis depends on H19, which acts as the Proton acceptor. 2 residues coordinate substrate: S169 and H198. H198 and H200 together coordinate Mn(2+). Substrate is bound at residue Y289.

It belongs to the 4-hydroxy-2-oxovalerate aldolase family.

It catalyses the reaction (S)-4-hydroxy-2-oxopentanoate = acetaldehyde + pyruvate. The sequence is that of 4-hydroxy-2-oxovalerate aldolase 3 (hsaF) from Rhodococcus jostii (strain RHA1).